The primary structure comprises 713 residues: Probable 1-deoxy-D-xylulose-5-phosphate synthase 2, chloroplastic (713 aa).

The N-terminal 30 residues, 1–30 (MALQASSSPSMFRAIPTNTNASCRRKLQVR), are a transit peptide targeting the chloroplast. Thiamine diphosphate-binding positions include His140 and 181–183 (GHS). Mg(2+) is bound at residue Asp212. Thiamine diphosphate is bound by residues 213-214 (GA), Asn241, Tyr362, and Glu444. Asn241 contacts Mg(2+).

This sequence belongs to the transketolase family. DXPS subfamily. As to quaternary structure, homodimer. It depends on Mg(2+) as a cofactor. Requires thiamine diphosphate as cofactor.

The protein localises to the plastid. Its subcellular location is the chloroplast. The enzyme catalyses D-glyceraldehyde 3-phosphate + pyruvate + H(+) = 1-deoxy-D-xylulose 5-phosphate + CO2. It functions in the pathway metabolic intermediate biosynthesis; 1-deoxy-D-xylulose 5-phosphate biosynthesis; 1-deoxy-D-xylulose 5-phosphate from D-glyceraldehyde 3-phosphate and pyruvate: step 1/1. In terms of biological role, catalyzes the acyloin condensation reaction between C atoms 2 and 3 of pyruvate and glyceraldehyde 3-phosphate to yield 1-deoxy-D-xylulose-5-phosphate (DXP). Is a limiting enzyme for plastidic isoprenoid biosynthesis and essential for chloroplast development. The polypeptide is Probable 1-deoxy-D-xylulose-5-phosphate synthase 2, chloroplastic (Oryza sativa subsp. japonica (Rice)).